A 93-amino-acid chain; its full sequence is Small ribosomal subunit protein bS16 (93 aa).

Belongs to the bacterial ribosomal protein bS16 family.

The polypeptide is Small ribosomal subunit protein bS16 (Dictyoglomus thermophilum (strain ATCC 35947 / DSM 3960 / H-6-12)).